We begin with the raw amino-acid sequence, 411 residues long: MMAEIICVGTELLLGQIVNTNAQYLSQRLASLGIDLYFQTTVGDNLNRLKGAIDIALKRSDILIFTGGLGPTSDDITKEAVCEYFGKKLILNQEVLDKIEKYFKHRGVKMPEINKKQAYVPEGSIILENRHGTAPGFIIENDGKIAILLPGPPFEMQPMFEEYVVPYLEKFSKEKIYSRVLKFIGIGESSIEERLSELIHNQSDPSLALYAKPFEVELRISTKKSDEAVAKDILDQMESKIRALLGEYIYGIDNQTLEEVVVEMLMQKGLKVSVAESCTGGLICNKITNVPGASNVFDRGFITYSNEAKVKELGVSEETLKNFGAVSHEVAKQMAQGALKTSLADIAISTTGIAGPTGATETKPVGLVYIGVATKNYVDSFEFRFSGDRLRIKEAASKAALDVLRKTIINY.

The protein belongs to the CinA family.

This is Putative competence-damage inducible protein from Caldicellulosiruptor saccharolyticus (strain ATCC 43494 / DSM 8903 / Tp8T 6331).